Reading from the N-terminus, the 214-residue chain is ATP phosphoribosyltransferase (214 aa).

It belongs to the ATP phosphoribosyltransferase family. Short subfamily. In terms of assembly, heteromultimer composed of HisG and HisZ subunits.

The protein resides in the cytoplasm. It catalyses the reaction 1-(5-phospho-beta-D-ribosyl)-ATP + diphosphate = 5-phospho-alpha-D-ribose 1-diphosphate + ATP. It participates in amino-acid biosynthesis; L-histidine biosynthesis; L-histidine from 5-phospho-alpha-D-ribose 1-diphosphate: step 1/9. Catalyzes the condensation of ATP and 5-phosphoribose 1-diphosphate to form N'-(5'-phosphoribosyl)-ATP (PR-ATP). Has a crucial role in the pathway because the rate of histidine biosynthesis seems to be controlled primarily by regulation of HisG enzymatic activity. The polypeptide is ATP phosphoribosyltransferase (Azoarcus sp. (strain BH72)).